The sequence spans 486 residues: Cardiolipin synthase A (486 aa).

A run of 2 helical transmembrane segments spans residues 3–23 (TFYTVVSWLVILGYWVLIAGV) and 38–58 (MAWLLIIYILPLVGIIAYLSV). PLD phosphodiesterase domains lie at 219–246 (MDLRQHRKMVMIDNYIAYTGSMNMVDPR) and 399–426 (EGGLLHTKSVLVDGELSLVGTVNLDMRS). Catalysis depends on residues histidine 224, lysine 226, aspartate 231, histidine 404, lysine 406, and aspartate 411.

This sequence belongs to the phospholipase D family. Cardiolipin synthase subfamily. ClsA sub-subfamily.

It localises to the cell inner membrane. The catalysed reaction is 2 a 1,2-diacyl-sn-glycero-3-phospho-(1'-sn-glycerol) = a cardiolipin + glycerol. Functionally, catalyzes the reversible phosphatidyl group transfer from one phosphatidylglycerol molecule to another to form cardiolipin (CL) (diphosphatidylglycerol) and glycerol. The protein is Cardiolipin synthase A of Salmonella arizonae (strain ATCC BAA-731 / CDC346-86 / RSK2980).